A 141-amino-acid chain; its full sequence is Ribonuclease P protein component (141 aa).

Residues 114–134 show a composition bias toward basic and acidic residues; it reads RRIKAKGERRGDGKRRTERPE. A disordered region spans residues 114-141; the sequence is RRIKAKGERRGDGKRRTERPESGPVNGK.

It belongs to the RnpA family. Consists of a catalytic RNA component (M1 or rnpB) and a protein subunit.

It catalyses the reaction Endonucleolytic cleavage of RNA, removing 5'-extranucleotides from tRNA precursor.. In terms of biological role, RNaseP catalyzes the removal of the 5'-leader sequence from pre-tRNA to produce the mature 5'-terminus. It can also cleave other RNA substrates such as 4.5S RNA. The protein component plays an auxiliary but essential role in vivo by binding to the 5'-leader sequence and broadening the substrate specificity of the ribozyme. The protein is Ribonuclease P protein component of Brucella anthropi (strain ATCC 49188 / DSM 6882 / CCUG 24695 / JCM 21032 / LMG 3331 / NBRC 15819 / NCTC 12168 / Alc 37) (Ochrobactrum anthropi).